The sequence spans 149 residues: Alpha-crystallin A chain (149 aa).

The sHSP domain occupies 28–138; it reads LLRGFMDSGI…SHSERPIPVS (111 aa). Positions 55, 76, 78, 83, 91, and 130 each coordinate Zn(2+). The interval 125 to 149 is disordered; the sequence is NLVSSHSERPIPVSREEKPTSAPSS. Residues 130–143 are compositionally biased toward basic and acidic residues; that stretch reads HSERPIPVSREEKP. Residue S138 is glycosylated (O-linked (GlcNAc) serine).

Belongs to the small heat shock protein (HSP20) family. Heteropolymer composed of three CRYAA and one CRYAB subunits. Inter-subunit bridging via zinc ions enhances stability, which is crucial as there is no protein turn over in the lens. Can also form homodimers and homotetramers (dimers of dimers) which serve as the building blocks of homooligomers. Within homooligomers, the zinc-binding motif is created from residues of 3 different molecules. His-76 and Glu-78 from one molecule are ligands of the zinc ion, and His-83 and His-130 residues from additional molecules complete the site with tetrahedral coordination geometry.

It localises to the cytoplasm. The protein resides in the nucleus. Contributes to the transparency and refractive index of the lens. May act as a chaperone, preventing aggregation of various proteins under a wide range of stress conditions. The polypeptide is Alpha-crystallin A chain (CRYAA) (Rana temporaria (European common frog)).